A 130-amino-acid polypeptide reads, in one-letter code: Zinc finger A20 and AN1 domain-containing stress-associated protein 10 (130 aa).

An A20-type zinc finger spans residues 4–38 (ETEALPCEGGCGLYGTRVNNNLCSLCYKKSVLQHS). Zn(2+)-binding residues include cysteine 10, cysteine 14, cysteine 26, cysteine 29, cysteine 71, cysteine 74, cysteine 85, cysteine 87, cysteine 92, histidine 95, histidine 101, and cysteine 103. The AN1-type zinc finger occupies 65–111 (PVKKRRCGICKRKVGMLGFKCRCGHMFCGSHRYPEEHSCPFDYKQSG).

Functionally, may be involved in environmental stress response. This is Zinc finger A20 and AN1 domain-containing stress-associated protein 10 (SAP10) from Arabidopsis thaliana (Mouse-ear cress).